A 244-amino-acid polypeptide reads, in one-letter code: 3-oxoacyl-[acyl-carrier-protein] reductase FabG (244 aa).

Residues 9-12 (GASR), 60-61 (NV), and Asn-87 contribute to the NADP(+) site. Ser-139 is a binding site for substrate. Residue Tyr-152 is the Proton acceptor of the active site. NADP(+) contacts are provided by residues 152 to 156 (YVATK) and Ile-185.

Belongs to the short-chain dehydrogenases/reductases (SDR) family. In terms of assembly, homotetramer.

The catalysed reaction is a (3R)-hydroxyacyl-[ACP] + NADP(+) = a 3-oxoacyl-[ACP] + NADPH + H(+). It functions in the pathway lipid metabolism; fatty acid biosynthesis. Its function is as follows. Catalyzes the NADPH-dependent reduction of beta-ketoacyl-ACP substrates to beta-hydroxyacyl-ACP products, the first reductive step in the elongation cycle of fatty acid biosynthesis. The chain is 3-oxoacyl-[acyl-carrier-protein] reductase FabG (fabG) from Staphylococcus epidermidis (strain ATCC 35984 / DSM 28319 / BCRC 17069 / CCUG 31568 / BM 3577 / RP62A).